Here is a 509-residue protein sequence, read N- to C-terminus: Maturase K (509 aa).

Belongs to the intron maturase 2 family. MatK subfamily.

It localises to the plastid. The protein resides in the chloroplast. Its function is as follows. Usually encoded in the trnK tRNA gene intron. Probably assists in splicing its own and other chloroplast group II introns. The chain is Maturase K from Anthocercis viscosa (Sticky tailflower).